The sequence spans 189 residues: MAKLIVGLGNPGPRYAATRHNAGWMLLDAFARKHGVAIEQRGFEGLYGELRWGAEAEKVILLKPLTYMNLSGRSVAQAARFYRIAPADILVLFDDLDLEPGRLRLRAKGSAGGHNGVKSVIAELGTAEFPRLRIGIGRPAPGWEVIDWVLAPFGPDDAAAVAAALPRAVEAVECFLTEGILAAMNRYNT.

Position 15 (Y15) interacts with tRNA. H20 acts as the Proton acceptor in catalysis. TRNA is bound by residues Y67, N69, and N115.

This sequence belongs to the PTH family. Monomer.

It is found in the cytoplasm. It catalyses the reaction an N-acyl-L-alpha-aminoacyl-tRNA + H2O = an N-acyl-L-amino acid + a tRNA + H(+). Its function is as follows. Hydrolyzes ribosome-free peptidyl-tRNAs (with 1 or more amino acids incorporated), which drop off the ribosome during protein synthesis, or as a result of ribosome stalling. In terms of biological role, catalyzes the release of premature peptidyl moieties from peptidyl-tRNA molecules trapped in stalled 50S ribosomal subunits, and thus maintains levels of free tRNAs and 50S ribosomes. The protein is Peptidyl-tRNA hydrolase of Symbiobacterium thermophilum (strain DSM 24528 / JCM 14929 / IAM 14863 / T).